Consider the following 570-residue polypeptide: Potassium-transporting ATPase potassium-binding subunit (570 aa).

11 consecutive transmembrane segments (helical) span residues 7-27 (AEIA…GVFL), 65-85 (AYAL…YAVL), 95-115 (PQGF…SFIT), 135-155 (LVLT…AAAL), 179-199 (LYLL…LGLP), 254-274 (LTNL…FFAF), 286-306 (ALVI…YATE), 383-403 (GVAI…LMVG), 422-442 (ILAV…AAVL), 489-509 (LGIA…AIAG), and 528-548 (GGLF…LQFF).

The protein belongs to the KdpA family. As to quaternary structure, the system is composed of three essential subunits: KdpA, KdpB and KdpC.

It localises to the cell inner membrane. Part of the high-affinity ATP-driven potassium transport (or Kdp) system, which catalyzes the hydrolysis of ATP coupled with the electrogenic transport of potassium into the cytoplasm. This subunit binds the periplasmic potassium ions and delivers the ions to the membrane domain of KdpB through an intramembrane tunnel. The polypeptide is Potassium-transporting ATPase potassium-binding subunit (Caulobacter vibrioides (strain ATCC 19089 / CIP 103742 / CB 15) (Caulobacter crescentus)).